Here is a 222-residue protein sequence, read N- to C-terminus: Coiled-coil domain-containing protein 43 homolog (222 aa).

A coiled-coil region spans residues 80 to 111; it reads ETENKLKLTNLKLEQELKIKETTQSEINEEEK. Disordered stretches follow at residues 102–126 and 159–222; these read TQSE…EQKK and EDNK…KRRL. 2 stretches are compositionally biased toward basic and acidic residues: residues 112–126 and 175–212; these read YENP…EQKK and RIAD…EEKK. Residues 168–222 adopt a coiled-coil conformation; the sequence is GENLNAKRIADEEKAKREKSKIEHQKKVQRDKEALEKQKRDEEKKKTVKKEKRRL. The segment covering 213 to 222 has biased composition (basic residues); it reads KTVKKEKRRL.

This sequence belongs to the CCDC43 family.

This Dictyostelium discoideum (Social amoeba) protein is Coiled-coil domain-containing protein 43 homolog.